Reading from the N-terminus, the 388-residue chain is L-arabinitol 4-dehydrogenase (388 aa).

Residues cysteine 55, histidine 80, glutamate 81, cysteine 110, cysteine 113, cysteine 116, cysteine 124, and glutamate 165 each coordinate Zn(2+). NAD(+) is bound by residues 192-193 (PI), aspartate 213, arginine 218, isoleucine 293, and 317-319 (QYR).

The protein belongs to the zinc-containing alcohol dehydrogenase family. As to quaternary structure, homotetramer. The cofactor is Zn(2+).

It carries out the reaction L-arabinitol + NAD(+) = L-xylulose + NADH + H(+). The protein operates within carbohydrate degradation; L-arabinose degradation via L-arabinitol; D-xylulose 5-phosphate from L-arabinose (fungal route): step 2/5. Catalyzes the NAD-dependent oxidation of L-arabinitol to L-xylulose in the fungal L-arabinose catabolic pathway. L-arabinose catabolism is important for using plant material as a carbon source. NADP cannot act as a cosubstrate. The chain is L-arabinitol 4-dehydrogenase (lad) from Talaromyces emersonii (Thermophilic fungus).